Reading from the N-terminus, the 190-residue chain is Ribosome maturation factor RimM (190 aa).

A PRC barrel domain is found at 95–171; the sequence is DPDEFYDHEL…VVMIEPPEGL (77 aa). Positions 169-190 are disordered; sequence EGLLDPDFGDKSNSDNSNSDND.

It belongs to the RimM family. In terms of assembly, binds ribosomal protein uS19.

The protein resides in the cytoplasm. In terms of biological role, an accessory protein needed during the final step in the assembly of 30S ribosomal subunit, possibly for assembly of the head region. Essential for efficient processing of 16S rRNA. May be needed both before and after RbfA during the maturation of 16S rRNA. It has affinity for free ribosomal 30S subunits but not for 70S ribosomes. The sequence is that of Ribosome maturation factor RimM from Rhodococcus erythropolis (strain PR4 / NBRC 100887).